Consider the following 104-residue polypeptide: Large ribosomal subunit protein uL24 (104 aa).

The protein belongs to the universal ribosomal protein uL24 family. Part of the 50S ribosomal subunit.

Its function is as follows. One of two assembly initiator proteins, it binds directly to the 5'-end of the 23S rRNA, where it nucleates assembly of the 50S subunit. In terms of biological role, one of the proteins that surrounds the polypeptide exit tunnel on the outside of the subunit. In Bartonella bacilliformis (strain ATCC 35685 / KC583 / Herrer 020/F12,63), this protein is Large ribosomal subunit protein uL24.